The primary structure comprises 511 residues: Bifunctional purine biosynthesis protein PurH (511 aa).

The region spanning 1–145 (MKKRALVSVS…KNHQFVSVIV (145 aa)) is the MGS-like domain.

Belongs to the PurH family.

It carries out the reaction (6R)-10-formyltetrahydrofolate + 5-amino-1-(5-phospho-beta-D-ribosyl)imidazole-4-carboxamide = 5-formamido-1-(5-phospho-D-ribosyl)imidazole-4-carboxamide + (6S)-5,6,7,8-tetrahydrofolate. The catalysed reaction is IMP + H2O = 5-formamido-1-(5-phospho-D-ribosyl)imidazole-4-carboxamide. Its pathway is purine metabolism; IMP biosynthesis via de novo pathway; 5-formamido-1-(5-phospho-D-ribosyl)imidazole-4-carboxamide from 5-amino-1-(5-phospho-D-ribosyl)imidazole-4-carboxamide (10-formyl THF route): step 1/1. It participates in purine metabolism; IMP biosynthesis via de novo pathway; IMP from 5-formamido-1-(5-phospho-D-ribosyl)imidazole-4-carboxamide: step 1/1. In Bacillus cereus (strain G9842), this protein is Bifunctional purine biosynthesis protein PurH.